The sequence spans 287 residues: Transmembrane protein 71 (287 aa).

A disordered region spans residues 1–25 (MYRDSPLMSTPVANDSRSDEGPSGK). 2 helical membrane passes run 218-238 (AGLMHKVSFQAILLAVCLVIS) and 244-264 (FVGGELASIFTCALLITIAYV).

The protein belongs to the TMEM71 family.

The protein resides in the membrane. In Mus musculus (Mouse), this protein is Transmembrane protein 71 (Tmem71).